Reading from the N-terminus, the 331-residue chain is Tetraacyldisaccharide 4'-kinase (331 aa).

55 to 62 (SVGGNGKT) lines the ATP pocket.

This sequence belongs to the LpxK family.

The catalysed reaction is a lipid A disaccharide + ATP = a lipid IVA + ADP + H(+). It functions in the pathway glycolipid biosynthesis; lipid IV(A) biosynthesis; lipid IV(A) from (3R)-3-hydroxytetradecanoyl-[acyl-carrier-protein] and UDP-N-acetyl-alpha-D-glucosamine: step 6/6. Its function is as follows. Transfers the gamma-phosphate of ATP to the 4'-position of a tetraacyldisaccharide 1-phosphate intermediate (termed DS-1-P) to form tetraacyldisaccharide 1,4'-bis-phosphate (lipid IVA). In Aeromonas salmonicida (strain A449), this protein is Tetraacyldisaccharide 4'-kinase.